Consider the following 1835-residue polypeptide: MANSTGKAPPDERRKGLAFLDELRQFHHSRGSPFKKIPAVGGKELDLHGLYTRVTTLGGFAKVSEKNQWGEIVEEFNFPRSCSNAAFALKQYYLRYLEKYEKVHHFGEDDDEVPPGNPKPQLPIGAIPSSYNYQQHSVSDYLRQSYGLSMDFNSPNDYNKLVLSLLSGLPNEVDFAINVCTLLSNESKHVMQLEKDPKIITLLLANAGVFDDTLGSFSTVFGEEWKEKTDRDFVKFWKDIVDDNEVRDLISDRNKSHEGTSGEWIWESLFHPPRKLGINDIEGQRVLQIAVILRNLSFEEGNVKLLAANRTCLRFLLLSAHSHFISLRQLGLDTLGNIAAELLLDPVDFKTTHLMFHTVTKCLMSRDRFLKMRGMEILGNLCKAEDNGVLICEYVDQDSYREIICHLTLPDVLLVISTLEVLYMLTEMGDVACTKIAKVEKSIDMLVCLVSMDIQMFGPDALAAVKLIEHPSSSHQMLSEIRPQAIEQVQTQTHVASAPASRAVVAQHVAPPPGIVEIDSEKFACQWLNAHFEVNPDCSVSRAEMYSEYLSTCSKLARGGILTSTGFYKCLRTVFPNHTVKRVEDSSSNGQAHIHVVGVKRRAIPLPIQMYYQQQPVSTSVVRVDSVPDVSPAPSPAGIPHGSQTIGNHFQRTPVANQSSNLTATQMSFPVQGVHTVAQTVSRIPQNPSPHTHQQQNAPVTVIQSKAPIPCEVVKATVIQNSIPQTGVPVSIAVGGGPPQSSVVQNHSTGPQPVTVVNSQTLLHHPSVIPQQSPLHTVVPGQIPSGTPVTVIQQAVPQSHMFGRVQNIPACTSTVSQGQQLITTSPQPVQTSSQQTSAGSQSQDTVIIAPPQYVTTSASNIVSATSVQNFQVATGQMVTIAGVPSPQASRVGFQNIAPKPLPSQQVSSTVVQQPIQQPQQPTQQSVVIVSQPAQQGQTYAPAIHQIVLANPAALPAGQTVQLTGQPNITPSSSPSPVPATNNQVPTAMSSSSTPQSQGPPPTVSQMLSVKRQQQQQHSPAPPPQQVQVQVQQPQQVQMQVQPQQSNAGVGQPASGESSLIKQLLLPKRGPSTPGGKLILPAPQIPPPNNARAPSPQVVYQVASNQAAGFGVQGQTPAQQLLVGQQNVQLVPSAMPPSGGVQTVPISNLQILPGPLISNSPATIFQGTSGNQVTITVVPNTSFAPATVSQGNATQLIAPAGITMSGTQTGVGLPVQTLPATQASPAGQSSCTTATPPFKGDKIICQKEEEAKEATGLHVHERKIEVMENPSCRRGATNTSNGDTKENEMHVGSLLNGRKYSDSSLPPSNSGKIQSETNQCSLISNGPSLELGENGASGKQNSEQIDMQDIKSDLRKPLVNGICDFDKGDGSHLSKNIPNHKTSNHVGNGEISPMEPQGTLDITQQDTAKGDQLERISNGPVLTLGGSSVSSIQEASNAATQQFSGTDLLNGPLASSLNSDVPQQRPSVVVSPHSTTSVIQGHQIIAVPDSGSKVSHSPALSSDVRSTNGTAECKTVKRPAEDTDRETVAGIPNKVGVRIVTISDPNNAGCSATMVAVPAGADPSTVAKVAIESAVQQKQQHPPTYVQNVVPQNTPMPPSPAVQVQGQPNSSQPSPFSGSSQPGDPMRKPGQNFMCLWQSCKKWFQTPSQVFYHAATEHGGKDVYPGQCLWEGCEPFQRQRFSFITHLQDKHCSKDALLAGLKQDEPGQAGSQKSSTKQPTVGGTSSTPRAQKAIVNHPSAALMALRRGSRNLVFRDFTDEKEGPITKHIRLTAALILKNIGKYSECGRRLLKRHENNLSVLAISNMEASSTLAKCLYELNFTVQSKEQEKDSEMLQ.

Ala2 carries the post-translational modification N-acetylalanine. The residue at position 4 (Ser4) is a Phosphoserine. Residues Lys7, Lys15, and Lys119 each participate in a glycyl lysine isopeptide (Lys-Gly) (interchain with G-Cter in SUMO2) cross-link. Residues 13–105 (RRKGLAFLDE…YLEKYEKVHH (93 aa)) form the ARID domain. Residues 313-317 (LRFLL) carry the LXXLL motif. The RFX-type winged-helix DNA-binding region spans 524–603 (ACQWLNAHFE…IHVVGVKRRA (80 aa)). Lys555 participates in a covalent cross-link: Glycyl lysine isopeptide (Lys-Gly) (interchain with G-Cter in SUMO2). Phosphoserine occurs at positions 631 and 635. A Phosphothreonine modification is found at Thr653. Ser689 is modified (phosphoserine). Thr692 carries the post-translational modification Phosphothreonine. Disordered stretches follow at residues 819–844 (QQLI…QSQD), 962–1057 (LTGQ…SGES), 1266–1287 (MENP…KENE), 1295–1314 (NGRK…KIQS), and 1321–1341 (LISN…KQNS). 3 stretches are compositionally biased toward low complexity: residues 823-843 (TTSP…SQSQ), 985-996 (PTAMSSSSTPQS), and 1025-1044 (QVQV…QPQQ). The residue at position 1300 (Ser1300) is a Phosphoserine. Residues 1301–1314 (DSSLPPSNSGKIQS) show a composition bias toward polar residues. 2 positions are modified to phosphoserine: Ser1391 and Ser1496. Disordered regions lie at residues 1488–1522 (DSGS…AEDT) and 1572–1629 (SAVQ…RKPG). Residues 1491 to 1509 (SKVSHSPALSSDVRSTNGT) show a composition bias toward polar residues. The span at 1513–1522 (KTVKRPAEDT) shows a compositional bias: basic and acidic residues. Residues 1573–1592 (AVQQKQQHPPTYVQNVVPQN) are compositionally biased toward polar residues. A compositionally biased stretch (low complexity) spans 1602 to 1623 (QVQGQPNSSQPSPFSGSSQPGD). Residues 1632–1657 (FMCLWQSCKKWFQTPSQVFYHAATEH) form a C2H2-type zinc finger. Residues Lys1701, Lys1716, and Lys1731 each participate in a glycyl lysine isopeptide (Lys-Gly) (interchain with G-Cter in SUMO2) cross-link. Residues 1703-1728 (DEPGQAGSQKSSTKQPTVGGTSSTPR) form a disordered region. Polar residues predominate over residues 1708 to 1728 (AGSQKSSTKQPTVGGTSSTPR).

Component of the SWI/SNF-B (PBAF) chromatin remodeling complex, at least composed of SMARCA4/BRG1, SMARCB1/BAF47/SNF5, ACTL6A/BAF53A or ACTL6B/BAF53B, SMARCE1/BAF57, SMARCD1/BAF60A, SMARCD2/BAF60B, perhaps SMARCD3/BAF60C, SMARCC1/BAF155, SMARCC2/BAF170, PBRM1/BAF180, ARID2/BAF200 and actin. Interacts with SRF. Forms complexes with SRF and SRF cofactors MYOCD, NKX2-5 and SRFBP1. As to expression, highly expressed in heart.

It localises to the nucleus. In terms of biological role, involved in transcriptional activation and repression of select genes by chromatin remodeling (alteration of DNA-nucleosome topology). Required for the stability of the SWI/SNF chromatin remodeling complex SWI/SNF-B (PBAF). May be involved in targeting the complex to different genes. May be involved in regulating transcriptional activation of cardiac genes. This Homo sapiens (Human) protein is AT-rich interactive domain-containing protein 2.